We begin with the raw amino-acid sequence, 159 residues long: Calcium-binding protein CML39 (159 aa).

EF-hand domains are found at residues 18 to 53 (EKNR…LGEQ), 54 to 89 (MSDE…NDEF), 93 to 128 (EKKR…LGES), and 129 to 159 (RTTD…LMMR). Aspartate 31, asparagine 33, aspartate 35, arginine 37, glutamate 42, aspartate 67, aspartate 69, aspartate 71, methionine 73, and glutamate 78 together coordinate Ca(2+). 4 residues coordinate Ca(2+): aspartate 142, asparagine 144, aspartate 146, and glutamate 153.

Expressed in the zones of elongation and differentiation in seedling roots and at the root-hypocotyl junction. Expressed from stage 12 of flower development in anthers, specifically in pollen.

Potential calcium sensor that binds calcium in vitro. The chain is Calcium-binding protein CML39 (CML39) from Arabidopsis thaliana (Mouse-ear cress).